The following is a 1653-amino-acid chain: Protein TOPAZ1 (1653 aa).

3 disordered regions span residues methionine 1–valine 94, tyrosine 284–lysine 303, and isoleucine 415–glutamate 442. A compositionally biased stretch (basic and acidic residues) spans glycine 63–lysine 78. Over residues serine 423 to glutamate 442 the composition is skewed to basic and acidic residues.

In terms of tissue distribution, restricted to testis, where it localizes to germ cells.

The protein localises to the cytoplasm. The protein resides in the cytosol. Its function is as follows. Important for normal spermatogenesis and male fertility. Specifically required for progression to the post-meiotic stages of spermatocyte development. Seems to be necessary for normal expression levels of a number of testis-expressed gene transcripts, although its role in this process is unclear. This is Protein TOPAZ1 from Mus musculus (Mouse).